We begin with the raw amino-acid sequence, 641 residues long: Serine/threonine-protein kinase PK-1 (641 aa).

The Protein kinase domain maps to 18-280 (YRVDARIAVG…ARARDARARL (263 aa)). Residues 24 to 32 (IAVGGMATV) and lysine 47 contribute to the ATP site. Aspartate 141 serves as the catalytic Proton acceptor. The disordered stretch occupies residues 317 to 347 (LPVNEEDEGADAAHRTSRFRSPPPLPPRGRT). 4 consecutive PASTA domains span residues 375-441 (SGQF…TLSK), 442-508 (GPRT…LTVS), 509-576 (KGAP…TLSK), and 577-641 (GPEM…IEIR). The interval 469 to 494 (KPGMSTREFSDSVPAGSVISTEPGKG) is disordered.

Belongs to the protein kinase superfamily. Ser/Thr protein kinase family. Post-translationally, autophosphorylated on threonine residue(s).

The catalysed reaction is L-seryl-[protein] + ATP = O-phospho-L-seryl-[protein] + ADP + H(+). The enzyme catalyses L-threonyl-[protein] + ATP = O-phospho-L-threonyl-[protein] + ADP + H(+). The polypeptide is Serine/threonine-protein kinase PK-1 (spk1) (Streptomyces toyocaensis).